Here is a 238-residue protein sequence, read N- to C-terminus: Ubiquinone biosynthesis O-methyltransferase (238 aa).

Residues Arg-40, Gly-59, Asp-80, and Met-125 each contribute to the S-adenosyl-L-methionine site.

Belongs to the methyltransferase superfamily. UbiG/COQ3 family.

The catalysed reaction is a 3-demethylubiquinol + S-adenosyl-L-methionine = a ubiquinol + S-adenosyl-L-homocysteine + H(+). The enzyme catalyses a 3-(all-trans-polyprenyl)benzene-1,2-diol + S-adenosyl-L-methionine = a 2-methoxy-6-(all-trans-polyprenyl)phenol + S-adenosyl-L-homocysteine + H(+). The protein operates within cofactor biosynthesis; ubiquinone biosynthesis. Its function is as follows. O-methyltransferase that catalyzes the 2 O-methylation steps in the ubiquinone biosynthetic pathway. This is Ubiquinone biosynthesis O-methyltransferase from Paracidovorax citrulli (strain AAC00-1) (Acidovorax citrulli).